Reading from the N-terminus, the 395-residue chain is Accessory Sec system protein translocase subunit SecY2 (395 aa).

10 helical membrane passes run Val13–Phe33, Ile63–Leu83, Leu102–Phe122, Gly128–Leu148, Val157–Ile177, Trp190–Phe210, Met239–Gly259, Val272–Val292, Leu326–Leu346, and Tyr355–Ile375.

This sequence belongs to the SecY/SEC61-alpha family. SecY2 subfamily. Component of the accessory SecA2/SecY2 protein translocase complex required to export cell wall proteins. May form heterotrimers with SecE and SecG subunits.

It is found in the cell membrane. In terms of biological role, part of the accessory SecA2/SecY2 system specifically required for export of possible cell wall proteins. The central subunit of a protein translocation channel. The chain is Accessory Sec system protein translocase subunit SecY2 from Lactobacillus johnsonii (strain CNCM I-12250 / La1 / NCC 533).